The primary structure comprises 223 residues: Adenylate kinase 4, mitochondrial (223 aa).

15 to 20 (GSGKGT) serves as a coordination point for a ribonucleoside 5'-triphosphate. The NMP stretch occupies residues 35 to 64 (SSGHFLRENIKANTEVGDMAKQYIEKGLLV). Positions 36 and 41 each coordinate AMP. Lys-60 carries the post-translational modification N6-succinyllysine. AMP-binding positions include 62–64 (LLV), 89–92 (GFPR), and Gln-96. Residues 125–162 (RRWIHPPSGRVYNLDFNPPHVHGMDDVTGEPLVQQEDD) form an LID region. A ribonucleoside 5'-triphosphate contacts are provided by residues Arg-126 and 135–136 (VY). Arg-170 provides a ligand contact to AMP. Lys-175 is modified (N6-acetyllysine). An N6-acetyllysine; alternate mark is found at Lys-179 and Lys-186. 2 positions are modified to N6-succinyllysine; alternate: Lys-179 and Lys-186. Residue Thr-199 participates in a ribonucleoside 5'-triphosphate binding.

It belongs to the adenylate kinase family. AK3 subfamily. Monomer. Interacts with SLC25A5/ANT2.

The protein resides in the mitochondrion matrix. The catalysed reaction is a ribonucleoside 5'-phosphate + ATP = a ribonucleoside 5'-diphosphate + ADP. It carries out the reaction AMP + ATP = 2 ADP. It catalyses the reaction GTP + AMP = GDP + ADP. The enzyme catalyses CMP + ATP = CDP + ADP. The catalysed reaction is GTP + CMP = CDP + GDP. It carries out the reaction dAMP + ATP = dADP + ADP. It catalyses the reaction dCMP + ATP = dCDP + ADP. The enzyme catalyses a 2'-deoxyribonucleoside 5'-diphosphate + ATP = a 2'-deoxyribonucleoside 5'-triphosphate + ADP. The catalysed reaction is a ribonucleoside 5'-diphosphate + ATP = a ribonucleoside 5'-triphosphate + ADP. It carries out the reaction GDP + ATP = GTP + ADP. It catalyses the reaction CDP + GTP = CTP + GDP. The enzyme catalyses CDP + ATP = CTP + ADP. The catalysed reaction is UDP + ATP = UTP + ADP. It carries out the reaction GTP + UDP = UTP + GDP. It catalyses the reaction dADP + GTP = dATP + GDP. The enzyme catalyses dCDP + GTP = dCTP + GDP. The catalysed reaction is dCDP + ATP = dCTP + ADP. It carries out the reaction dGDP + ATP = dGTP + ADP. It catalyses the reaction dTDP + GTP = dTTP + GDP. The enzyme catalyses dTDP + ATP = dTTP + ADP. Broad-specificity mitochondrial nucleoside phosphate kinase involved in cellular nucleotide homeostasis by catalyzing nucleoside-phosphate interconversions. Similar to other adenylate kinases, preferentially catalyzes the phosphorylation of the nucleoside monophosphate AMP with ATP as phosphate donor to produce ADP. Phosphorylates only AMP when using GTP as phosphate donor. In vitro, can also catalyze the phosphorylation of CMP, dAMP and dCMP and use GTP as an alternate phosphate donor. Moreover, exhibits a diphosphate kinase activity, producing ATP, CTP, GTP, UTP, TTP, dATP, dCTP and dGTP from the corresponding diphosphate substrates with either ATP or GTP as phosphate donors. Plays a role in controlling cellular ATP levels by regulating phosphorylation and activation of the energy sensor protein kinase AMPK. Plays a protective role in the cellular response to oxidative stress. This Bos taurus (Bovine) protein is Adenylate kinase 4, mitochondrial.